A 421-amino-acid polypeptide reads, in one-letter code: 4-hydroxy-3-methylbut-2-en-1-yl diphosphate synthase (flavodoxin) (421 aa).

Positions 311, 314, 357, and 364 each coordinate [4Fe-4S] cluster.

Belongs to the IspG family. Requires [4Fe-4S] cluster as cofactor.

The catalysed reaction is (2E)-4-hydroxy-3-methylbut-2-enyl diphosphate + oxidized [flavodoxin] + H2O + 2 H(+) = 2-C-methyl-D-erythritol 2,4-cyclic diphosphate + reduced [flavodoxin]. It functions in the pathway isoprenoid biosynthesis; isopentenyl diphosphate biosynthesis via DXP pathway; isopentenyl diphosphate from 1-deoxy-D-xylulose 5-phosphate: step 5/6. Its function is as follows. Converts 2C-methyl-D-erythritol 2,4-cyclodiphosphate (ME-2,4cPP) into 1-hydroxy-2-methyl-2-(E)-butenyl 4-diphosphate. The sequence is that of 4-hydroxy-3-methylbut-2-en-1-yl diphosphate synthase (flavodoxin) from Xanthomonas euvesicatoria pv. vesicatoria (strain 85-10) (Xanthomonas campestris pv. vesicatoria).